A 235-amino-acid chain; its full sequence is Thrombin-like enzyme bilineobin (235 aa).

Positions 1–227 (IIGGDECNIN…HLDWIQSIIA (227 aa)) constitute a Peptidase S1 domain. Intrachain disulfides connect C7–C141, C28–C44, C78–C234, C120–C188, C152–C167, and C178–C203. Catalysis depends on H43, which acts as the Charge relay system. Residues N45, N57, and N81 are each glycosylated (N-linked (GlcNAc...) asparagine). The active-site Charge relay system is the D88. N132 and N148 each carry an N-linked (GlcNAc...) asparagine glycan. The active-site Charge relay system is S182. A glycan (N-linked (GlcNAc...) asparagine) is linked at N229.

Belongs to the peptidase S1 family. Snake venom subfamily. In terms of assembly, monomer. Post-translationally, glycosylated. Expressed by the venom gland.

The protein resides in the secreted. Its activity is regulated as follows. Not inhibited by hirudin. Functionally, thrombin-like snake venom serine protease that has coagulant activity by releasing fibrinopeptides A and B from fibrinogen alpha (FGA) and beta (FGB), with a preference for beta chain. The protein is Thrombin-like enzyme bilineobin of Agkistrodon bilineatus (Cantil).